We begin with the raw amino-acid sequence, 632 residues long: MAU2 chromatid cohesion factor homolog (632 aa).

TPR repeat units follow at residues 453–486 (GGFYYVQGLHAFHKNSFHEAKRFLRETLKMANAE) and 493–526 (SCSLVLLSHVFLSIGNSKESMNMVTPAMQLASKI).

The protein belongs to the SCC4/mau-2 family. As to quaternary structure, interacts with Nipped-B to form the cohesin loading complex.

Its subcellular location is the nucleus. It is found in the nucleoplasm. In terms of biological role, required for association of the cohesin complex with chromatin during interphase. Plays a role in sister chromatid cohesion and normal progression through prometaphase. In Drosophila sechellia (Fruit fly), this protein is MAU2 chromatid cohesion factor homolog.